The chain runs to 478 residues: Tubulin gamma chain (478 aa).

141 to 147 (AGGTGSG) provides a ligand contact to GTP. Positions 451-478 (ISQKESSSLANENGNGANNKPGKSAMAL) are disordered. Polar residues predominate over residues 459 to 468 (LANENGNGAN).

The protein belongs to the tubulin family.

It is found in the cytoplasm. Its subcellular location is the cytoskeleton. The protein localises to the microtubule organizing center. It localises to the centrosome. Tubulin is the major constituent of microtubules. The gamma chain is found at microtubule organizing centers (MTOC) such as the spindle poles or the centrosome, suggesting that it is involved in the minus-end nucleation of microtubule assembly. The sequence is that of Tubulin gamma chain from Reticulomyxa filosa.